Consider the following 400-residue polypeptide: Carbamoyl phosphate synthase small chain (400 aa).

Residues 1-199 are CPSase; that stretch reads MSNETNANST…PYVIEAEGEA (199 aa). L-glutamine is bound by residues Ser-66, Gly-250, and Gly-252. Residues 200–395 enclose the Glutamine amidotransferase type-1 domain; sequence RHTVVAYDLG…VALMDEDSEN (196 aa). Cys-278 (nucleophile) is an active-site residue. Positions 279, 282, 320, 322, and 323 each coordinate L-glutamine. Catalysis depends on residues His-368 and Glu-370.

The protein belongs to the CarA family. In terms of assembly, composed of two chains; the small (or glutamine) chain promotes the hydrolysis of glutamine to ammonia, which is used by the large (or ammonia) chain to synthesize carbamoyl phosphate. Tetramer of heterodimers (alpha,beta)4.

It catalyses the reaction hydrogencarbonate + L-glutamine + 2 ATP + H2O = carbamoyl phosphate + L-glutamate + 2 ADP + phosphate + 2 H(+). It carries out the reaction L-glutamine + H2O = L-glutamate + NH4(+). Its pathway is amino-acid biosynthesis; L-arginine biosynthesis; carbamoyl phosphate from bicarbonate: step 1/1. It functions in the pathway pyrimidine metabolism; UMP biosynthesis via de novo pathway; (S)-dihydroorotate from bicarbonate: step 1/3. In terms of biological role, small subunit of the glutamine-dependent carbamoyl phosphate synthetase (CPSase). CPSase catalyzes the formation of carbamoyl phosphate from the ammonia moiety of glutamine, carbonate, and phosphate donated by ATP, constituting the first step of 2 biosynthetic pathways, one leading to arginine and/or urea and the other to pyrimidine nucleotides. The small subunit (glutamine amidotransferase) binds and cleaves glutamine to supply the large subunit with the substrate ammonia. The protein is Carbamoyl phosphate synthase small chain of Corynebacterium efficiens (strain DSM 44549 / YS-314 / AJ 12310 / JCM 11189 / NBRC 100395).